The primary structure comprises 1187 residues: Nicotinate dehydrogenase subunit B (1187 aa).

Residues 764 to 784 (WWFGSLAGVFGAALGMLATAL) form a helical membrane-spanning segment. 3 consecutive Cytochrome c domains span residues 804 to 907 (AMLE…MSQT), 949 to 1057 (AQWN…SSLE), and 1075 to 1163 (VSLS…RHRF). Positions 818, 821, 822, 964, 967, 968, 1088, 1091, and 1092 each coordinate heme c.

The cofactor is Mo-molybdopterin cytosine dinucleotide.

It localises to the membrane. It catalyses the reaction 2 Fe(III)-[cytochrome] + nicotinate + H2O = 2 Fe(II)-[cytochrome] + 6-hydroxynicotinate + 2 H(+). Its pathway is cofactor degradation; nicotinate degradation. In terms of biological role, subunit of the two-component enzyme NicAB that mediates nicotinate hydroxylation, the first step in the aerobic nicotinate degradation pathway. Mediates conversion of nicotinate into 6-hydroxynicotinate (6HNA). The chain is Nicotinate dehydrogenase subunit B (nicB) from Pseudomonas putida (strain ATCC 47054 / DSM 6125 / CFBP 8728 / NCIMB 11950 / KT2440).